The chain runs to 354 residues: Hyaluronan and proteoglycan link protein 1 (354 aa).

Residues 1 to 9 constitute a propeptide that is removed on maturation; the sequence is MKSLLLLVL. Asparagine 21 and asparagine 56 each carry an N-linked (GlcNAc...) asparagine glycan. The Ig-like V-type domain maps to 38-152; sequence PRLLVEAEQA…EGLEDDTAVV (115 aa). Disulfide bonds link cysteine 61–cysteine 139, cysteine 181–cysteine 252, cysteine 205–cysteine 226, cysteine 279–cysteine 349, and cysteine 304–cysteine 325. Link domains are found at residues 159 to 254 and 259 to 351; these read VVFP…FCFT and GRFY…YCFR.

The protein belongs to the HAPLN family.

It localises to the secreted. It is found in the extracellular space. The protein resides in the extracellular matrix. Functionally, stabilizes the aggregates of proteoglycan monomers with hyaluronic acid in the extracellular cartilage matrix. The chain is Hyaluronan and proteoglycan link protein 1 (HAPLN1) from Sus scrofa (Pig).